A 213-amino-acid polypeptide reads, in one-letter code: Superoxide dismutase [Mn] (213 aa).

Mn(2+) is bound by residues histidine 27, histidine 82, aspartate 168, and histidine 172.

This sequence belongs to the iron/manganese superoxide dismutase family. In terms of assembly, homodimer. The cofactor is Mn(2+).

The enzyme catalyses 2 superoxide + 2 H(+) = H2O2 + O2. In terms of biological role, destroys superoxide anion radicals which are normally produced within the cells and which are toxic to biological systems. The protein is Superoxide dismutase [Mn] (sodA) of Mannheimia haemolytica (Pasteurella haemolytica).